A 430-amino-acid polypeptide reads, in one-letter code: Serine hydroxymethyltransferase (430 aa).

Residues leucine 126 and 130 to 132 (GHL) contribute to the (6S)-5,6,7,8-tetrahydrofolate site. At lysine 235 the chain carries N6-(pyridoxal phosphate)lysine.

This sequence belongs to the SHMT family. In terms of assembly, homodimer. Pyridoxal 5'-phosphate is required as a cofactor.

It is found in the cytoplasm. It catalyses the reaction (6R)-5,10-methylene-5,6,7,8-tetrahydrofolate + glycine + H2O = (6S)-5,6,7,8-tetrahydrofolate + L-serine. It participates in one-carbon metabolism; tetrahydrofolate interconversion. The protein operates within amino-acid biosynthesis; glycine biosynthesis; glycine from L-serine: step 1/1. Functionally, catalyzes the reversible interconversion of serine and glycine with tetrahydrofolate (THF) serving as the one-carbon carrier. This reaction serves as the major source of one-carbon groups required for the biosynthesis of purines, thymidylate, methionine, and other important biomolecules. Also exhibits THF-independent aldolase activity toward beta-hydroxyamino acids, producing glycine and aldehydes, via a retro-aldol mechanism. The protein is Serine hydroxymethyltransferase of Leifsonia xyli subsp. xyli (strain CTCB07).